A 426-amino-acid polypeptide reads, in one-letter code: Histone-binding protein RBBP7 (426 aa).

WD repeat units lie at residues 47-123 (QWLP…KINH), 129-174 (RARY…LRLR), 182-218 (GLSW…KIVD), 229-270 (VVED…HSVD), 276-313 (VNCL…LHSF), 319-370 (EIFQ…LFIH), and 377-404 (ISDF…VWQM).

This sequence belongs to the WD repeat RBAP46/RBAP48/MSI1 family. In terms of assembly, binds directly to helix 1 of the histone fold of histone H4, a region that is not accessible when H4 is in chromatin.

The protein localises to the nucleus. Functionally, core histone-binding subunit that may target chromatin remodeling factors, histone acetyltransferases and histone deacetylases to their histone substrates in a manner that is regulated by nucleosomal DNA. Component of several complexes which regulate chromatin metabolism. In Danio rerio (Zebrafish), this protein is Histone-binding protein RBBP7 (rbbp7).